The primary structure comprises 468 residues: Cysteine--tRNA ligase (468 aa).

Residue C33 participates in Zn(2+) binding. A 'HIGH' region motif is present at residues A35 to H45. Zn(2+) is bound by residues C211, H236, and E240. The 'KMSKS' region signature appears at K267–S271. K270 contributes to the ATP binding site.

It belongs to the class-I aminoacyl-tRNA synthetase family. In terms of assembly, monomer. Requires Zn(2+) as cofactor.

Its subcellular location is the cytoplasm. The catalysed reaction is tRNA(Cys) + L-cysteine + ATP = L-cysteinyl-tRNA(Cys) + AMP + diphosphate. This is Cysteine--tRNA ligase from Mycobacterium avium (strain 104).